The primary structure comprises 171 residues: Co-chaperone protein HscB (171 aa).

Residues Asp2–Leu74 enclose the J domain.

This sequence belongs to the HscB family. In terms of assembly, interacts with HscA and stimulates its ATPase activity. Interacts with IscU.

Co-chaperone involved in the maturation of iron-sulfur cluster-containing proteins. Seems to help targeting proteins to be folded toward HscA. The sequence is that of Co-chaperone protein HscB from Salmonella agona (strain SL483).